The sequence spans 204 residues: Endothelin-3 (204 aa).

Positions 1–17 are cleaved as a signal peptide; it reads MELRLWFLFGLTVTSAA. Residues 18–71 form a disordered region; that stretch reads GPVPRPQPGDAGRSGVPRAPSATKETMAMVATRGPSPRSSGQEQEPGPFGELAA. Positions 18-80 are excised as a propeptide; the sequence is GPVPRPQPGD…AKGGPVRYRA (63 aa). 2 cysteine pairs are disulfide-bonded: C83–C97 and C85–C93. A propeptide spanning residues 104-204 is cleaved from the precursor; the sequence is INTPERTVPY…KSRTDKARRL (101 aa). Residues 115–140 are disordered; sequence LSNHRGSVRGRRSAGPSPQSSQPSRG. Residues 127 to 140 are compositionally biased toward low complexity; sequence SAGPSPQSSQPSRG. Positions 144-158 are endothelin-like; it reads CACAESQDRACVYFC. The interval 166–204 is disordered; that stretch reads GASRTPETPDKEAGKPAGRATGGLHPRRLKSRTDKARRL.

Belongs to the endothelin/sarafotoxin family.

The protein localises to the secreted. Functionally, endothelins are endothelium-derived vasoconstrictor peptides. The sequence is that of Endothelin-3 (EDN3) from Sus scrofa (Pig).